We begin with the raw amino-acid sequence, 322 residues long: Aspartate carbamoyltransferase catalytic subunit (322 aa).

2 residues coordinate carbamoyl phosphate: R65 and T66. K93 contributes to the L-aspartate binding site. R115, H143, and Q146 together coordinate carbamoyl phosphate. L-aspartate is bound by residues R176 and R230. G271 and P272 together coordinate carbamoyl phosphate.

This sequence belongs to the aspartate/ornithine carbamoyltransferase superfamily. ATCase family. As to quaternary structure, heterododecamer (2C3:3R2) of six catalytic PyrB chains organized as two trimers (C3), and six regulatory PyrI chains organized as three dimers (R2).

The catalysed reaction is carbamoyl phosphate + L-aspartate = N-carbamoyl-L-aspartate + phosphate + H(+). Its pathway is pyrimidine metabolism; UMP biosynthesis via de novo pathway; (S)-dihydroorotate from bicarbonate: step 2/3. Catalyzes the condensation of carbamoyl phosphate and aspartate to form carbamoyl aspartate and inorganic phosphate, the committed step in the de novo pyrimidine nucleotide biosynthesis pathway. In Brucella abortus (strain S19), this protein is Aspartate carbamoyltransferase catalytic subunit.